We begin with the raw amino-acid sequence, 754 residues long: Protein neuralized (754 aa).

The NHR 1 domain maps to 106–260; it reads PLQFHSVHGD…NCTGIEFLDS (155 aa). Over residues 280-297 the composition is skewed to low complexity; it reads QQQQMPQPAANASSALNS. Residues 280–308 are disordered; sequence QQQQMPQPAANASSALNSHHPHQQSRRSL. 2 positions are modified to phosphoserine: serine 338 and serine 341. One can recognise an NHR 2 domain in the interval 368 to 523; that stretch reads PVPFHNTKGR…STQSLRMFRQ (156 aa). The segment at 701–742 adopts an RING-type zinc-finger fold; the sequence is CTICYENPIDSVLYMCGHMCMCYDCAIEQWRGVGGGQCPLCR.

The protein resides in the nucleus. Functionally, involved in neurogenesis. Interacts with other neurogenic proteins in the specification of the neuroblast versus epidermoblast cell fate. This chain is Protein neuralized (neur), found in Drosophila melanogaster (Fruit fly).